Reading from the N-terminus, the 836-residue chain is Protein translocase subunit SecA (836 aa).

Residues Gln85, 103–107 (GEGKT), and Asp492 each bind ATP. Residues Cys820, Cys822, Cys831, and Cys832 each coordinate Zn(2+).

Belongs to the SecA family. As to quaternary structure, monomer and homodimer. Part of the essential Sec protein translocation apparatus which comprises SecA, SecYEG and auxiliary proteins SecDF. Other proteins may also be involved. It depends on Zn(2+) as a cofactor.

The protein resides in the cell membrane. Its subcellular location is the cytoplasm. It carries out the reaction ATP + H2O + cellular proteinSide 1 = ADP + phosphate + cellular proteinSide 2.. Its function is as follows. Part of the Sec protein translocase complex. Interacts with the SecYEG preprotein conducting channel. Has a central role in coupling the hydrolysis of ATP to the transfer of proteins into and across the cell membrane, serving as an ATP-driven molecular motor driving the stepwise translocation of polypeptide chains across the membrane. The sequence is that of Protein translocase subunit SecA from Clostridium botulinum (strain Alaska E43 / Type E3).